Consider the following 62-residue polypeptide: Large ribosomal subunit protein uL29 (62 aa).

The protein belongs to the universal ribosomal protein uL29 family.

In Enterococcus faecalis (strain ATCC 700802 / V583), this protein is Large ribosomal subunit protein uL29.